A 68-amino-acid chain; its full sequence is MKLQEIKDFVKELRGLSQEELAKKENELKKELFELRFQAAAGQLEQTARLNEVKKQIARIKTVQSETK.

This sequence belongs to the universal ribosomal protein uL29 family.

The sequence is that of Large ribosomal subunit protein uL29 from Streptococcus suis (strain 98HAH33).